A 361-amino-acid polypeptide reads, in one-letter code: Phosphoserine aminotransferase (361 aa).

An L-glutamate-binding site is contributed by R42. Pyridoxal 5'-phosphate contacts are provided by residues 76–77, W102, T153, D173, and Q196; that span reads AR. An N6-(pyridoxal phosphate)lysine modification is found at K197. 238–239 provides a ligand contact to pyridoxal 5'-phosphate; it reads NT.

Belongs to the class-V pyridoxal-phosphate-dependent aminotransferase family. SerC subfamily. As to quaternary structure, homodimer. It depends on pyridoxal 5'-phosphate as a cofactor.

The protein resides in the cytoplasm. The catalysed reaction is O-phospho-L-serine + 2-oxoglutarate = 3-phosphooxypyruvate + L-glutamate. It catalyses the reaction 4-(phosphooxy)-L-threonine + 2-oxoglutarate = (R)-3-hydroxy-2-oxo-4-phosphooxybutanoate + L-glutamate. Its pathway is amino-acid biosynthesis; L-serine biosynthesis; L-serine from 3-phospho-D-glycerate: step 2/3. The protein operates within cofactor biosynthesis; pyridoxine 5'-phosphate biosynthesis; pyridoxine 5'-phosphate from D-erythrose 4-phosphate: step 3/5. In terms of biological role, catalyzes the reversible conversion of 3-phosphohydroxypyruvate to phosphoserine and of 3-hydroxy-2-oxo-4-phosphonooxybutanoate to phosphohydroxythreonine. This chain is Phosphoserine aminotransferase, found in Pectobacterium atrosepticum (strain SCRI 1043 / ATCC BAA-672) (Erwinia carotovora subsp. atroseptica).